The sequence spans 241 residues: Dephospho-CoA kinase CAB5 (241 aa).

The region spanning 3-211 is the DPCK domain; it reads VVGLTGGIAC…PSKLRTVLEY (209 aa). An ATP-binding site is contributed by 8 to 15; sequence GGIACGKS.

This sequence belongs to the CoaE family.

Its subcellular location is the endoplasmic reticulum. The protein localises to the mitochondrion. It is found in the nucleus. The enzyme catalyses 3'-dephospho-CoA + ATP = ADP + CoA + H(+). It participates in cofactor biosynthesis; coenzyme A biosynthesis; CoA from (R)-pantothenate: step 5/5. Functionally, catalyzes the phosphorylation of the 3'-hydroxyl group of dephosphocoenzyme A to form coenzyme A. This is Dephospho-CoA kinase CAB5 (CAB5) from Saccharomyces cerevisiae (strain ATCC 204508 / S288c) (Baker's yeast).